The primary structure comprises 294 residues: Ribosomal protein L11 methyltransferase (294 aa).

T147, G169, D191, and N231 together coordinate S-adenosyl-L-methionine.

It belongs to the methyltransferase superfamily. PrmA family.

It is found in the cytoplasm. It catalyses the reaction L-lysyl-[protein] + 3 S-adenosyl-L-methionine = N(6),N(6),N(6)-trimethyl-L-lysyl-[protein] + 3 S-adenosyl-L-homocysteine + 3 H(+). Functionally, methylates ribosomal protein L11. The polypeptide is Ribosomal protein L11 methyltransferase (Dichelobacter nodosus (strain VCS1703A)).